The following is a 305-amino-acid chain: UDP-3-O-acyl-N-acetylglucosamine deacetylase (305 aa).

Zn(2+) is bound by residues His-79, His-238, and Asp-242. The active-site Proton donor is His-265.

It belongs to the LpxC family. The cofactor is Zn(2+).

It carries out the reaction a UDP-3-O-[(3R)-3-hydroxyacyl]-N-acetyl-alpha-D-glucosamine + H2O = a UDP-3-O-[(3R)-3-hydroxyacyl]-alpha-D-glucosamine + acetate. Its pathway is glycolipid biosynthesis; lipid IV(A) biosynthesis; lipid IV(A) from (3R)-3-hydroxytetradecanoyl-[acyl-carrier-protein] and UDP-N-acetyl-alpha-D-glucosamine: step 2/6. In terms of biological role, catalyzes the hydrolysis of UDP-3-O-myristoyl-N-acetylglucosamine to form UDP-3-O-myristoylglucosamine and acetate, the committed step in lipid A biosynthesis. The sequence is that of UDP-3-O-acyl-N-acetylglucosamine deacetylase from Sodalis glossinidius (strain morsitans).